A 226-amino-acid chain; its full sequence is Xanthocillin biosynthesis cluster protein F (226 aa).

The protein operates within secondary metabolite biosynthesis. Functionally, part of the gene cluster that mediates the biosynthesis of the isocyanide xanthocillin and its derivatives. The first step of the pathway consists in the conversion of tyrosine into a vinyl-isonitrile intermediate by the isocyanide synthase xanB. Subsequent oxidative dimerization of this intermediate to form xanthocillin may involve the cytochrome P450 monooxygenase xanG, whose expression is coregulated with that of XanB. Xanthocillin can be further modified by the isonitrile hydratase-like protein xanA which introduces N-formyl groups and the methyltransferase xanE which introduces methyl groups, leading to the production of several derivatives including fumiformamide. Finally, fumiformamide can be subject to both oxidative and reductive cyclization to yield melanocins E and F, respectively. The protein is Xanthocillin biosynthesis cluster protein F of Aspergillus fumigatus (strain ATCC MYA-4609 / CBS 101355 / FGSC A1100 / Af293) (Neosartorya fumigata).